The primary structure comprises 193 residues: Ubiquitin-conjugating enzyme E2 E1 (193 aa).

The segment at 1 to 45 is disordered; it reads MSDDDSRASTSSSSSSSSNQQTEKETNTPKKKESKVSMSKNSKLL. An N-acetylserine modification is found at S2. Positions 8-18 are enriched in low complexity; the sequence is ASTSSSSSSSS. Over residues 22–35 the composition is skewed to basic and acidic residues; that stretch reads TEKETNTPKKKESK. The span at 36-45 shows a compositional bias: polar residues; it reads VSMSKNSKLL. The region spanning 47–193 is the UBC core domain; the sequence is TSAKRIQKEL…ARQWTKRYAT (147 aa). C131 functions as the Glycyl thioester intermediate in the catalytic mechanism. K136 participates in a covalent cross-link: Glycyl lysine isopeptide (Lys-Gly) (interchain with G-Cter in ISG15).

The protein belongs to the ubiquitin-conjugating enzyme family. Interacts with RNF14. ISGylation suppresses ubiquitin E2 enzyme activity. Post-translationally, autoubiquitinated in vitro.

It localises to the nucleus. The enzyme catalyses S-ubiquitinyl-[E1 ubiquitin-activating enzyme]-L-cysteine + [E2 ubiquitin-conjugating enzyme]-L-cysteine = [E1 ubiquitin-activating enzyme]-L-cysteine + S-ubiquitinyl-[E2 ubiquitin-conjugating enzyme]-L-cysteine.. It catalyses the reaction S-ubiquitinyl-[E1 ubiquitin-activating enzyme]-L-cysteine + [acceptor protein]-L-lysine = [E1 ubiquitin-activating enzyme]-L-cysteine + N(6)-monoubiquitinyl-[acceptor protein]-L-lysine.. The protein operates within protein modification; protein ubiquitination. Its function is as follows. Accepts ubiquitin from the E1 complex and catalyzes its covalent attachment to other proteins. Catalyzes the covalent attachment of ISG15 to other proteins. Mediates the selective degradation of short-lived and abnormal proteins. In vitro also catalyzes 'Lys-48'-linked polyubiquitination. Catalyzes monoubiquitination of other proteins in both an E3-dependent and E3-independent manner. The protein is Ubiquitin-conjugating enzyme E2 E1 of Homo sapiens (Human).